The sequence spans 377 residues: GTP 3',8-cyclase (377 aa).

The segment at 1 to 29 (MTTRLYLSPTPPRNDREGASKSTSASIKH) is disordered. In terms of domain architecture, Radical SAM core spans 45–271 (RFGRIARDLR…FTLSPAKEPR (227 aa)). A GTP-binding site is contributed by Arg-54. Positions 61 and 65 each coordinate [4Fe-4S] cluster. Residue Tyr-67 coordinates S-adenosyl-L-methionine. A [4Fe-4S] cluster-binding site is contributed by Cys-68. Arg-105 is a GTP binding site. Gly-109 contacts S-adenosyl-L-methionine. Thr-140 serves as a coordination point for GTP. Ser-164 contacts S-adenosyl-L-methionine. Lys-201 provides a ligand contact to GTP. Met-235 provides a ligand contact to S-adenosyl-L-methionine. 2 residues coordinate [4Fe-4S] cluster: Cys-304 and Cys-307. Residue 309–311 (RSR) coordinates GTP. Residue Cys-321 coordinates [4Fe-4S] cluster.

Belongs to the radical SAM superfamily. MoaA family. As to quaternary structure, monomer and homodimer. The cofactor is [4Fe-4S] cluster.

It carries out the reaction GTP + AH2 + S-adenosyl-L-methionine = (8S)-3',8-cyclo-7,8-dihydroguanosine 5'-triphosphate + 5'-deoxyadenosine + L-methionine + A + H(+). Its pathway is cofactor biosynthesis; molybdopterin biosynthesis. Functionally, catalyzes the cyclization of GTP to (8S)-3',8-cyclo-7,8-dihydroguanosine 5'-triphosphate. This Corynebacterium glutamicum (strain ATCC 13032 / DSM 20300 / JCM 1318 / BCRC 11384 / CCUG 27702 / LMG 3730 / NBRC 12168 / NCIMB 10025 / NRRL B-2784 / 534) protein is GTP 3',8-cyclase.